The sequence spans 329 residues: Minor capsid protein A1 (329 aa).

The protein localises to the virion. Its function is as follows. Minor capsid protein. The chain is Minor capsid protein A1 from Escherichia coli (Bacteriophage Q-beta).